The primary structure comprises 336 residues: 3-isopropylmalate dehydrogenase (336 aa).

Substrate-binding residues include Arg87, Arg97, Arg121, and Asp211. Residues Asp211, Asp235, and Asp239 each contribute to the Mg(2+) site. 271–283 (GSAPDIAGQGIAD) provides a ligand contact to NAD(+).

It belongs to the isocitrate and isopropylmalate dehydrogenases family. LeuB type 2 subfamily. In terms of assembly, homodimer. The cofactor is Mg(2+). It depends on Mn(2+) as a cofactor.

The protein resides in the cytoplasm. It catalyses the reaction (2R,3S)-3-isopropylmalate + NAD(+) = 4-methyl-2-oxopentanoate + CO2 + NADH. It participates in amino-acid biosynthesis; L-leucine biosynthesis; L-leucine from 3-methyl-2-oxobutanoate: step 3/4. Functionally, catalyzes the oxidation of 3-carboxy-2-hydroxy-4-methylpentanoate (3-isopropylmalate) to 3-carboxy-4-methyl-2-oxopentanoate. The product decarboxylates to 4-methyl-2 oxopentanoate. In Mycobacterium leprae (strain Br4923), this protein is 3-isopropylmalate dehydrogenase.